The primary structure comprises 342 residues: Global transcription regulator FGP1 (342 aa).

The segment at 91–113 (FSPGEKKRASKKPKKQAGVAKAY) is disordered.

The protein belongs to the MIT1/WOR1 family.

The protein resides in the nucleus. Its function is as follows. Global transcriptional regulator of pathogenicity. Regulates many genes during growth in putrescine medium and during infection. Involved in the developmental processes of conidium formation and sexual reproduction and modulates a morphological change that accompanies mycotoxin production. The protein is Global transcription regulator FGP1 of Gibberella zeae (strain ATCC MYA-4620 / CBS 123657 / FGSC 9075 / NRRL 31084 / PH-1) (Wheat head blight fungus).